The chain runs to 383 residues: Lipid-A-disaccharide synthase (383 aa).

It belongs to the LpxB family.

The enzyme catalyses a lipid X + a UDP-2-N,3-O-bis[(3R)-3-hydroxyacyl]-alpha-D-glucosamine = a lipid A disaccharide + UDP + H(+). It functions in the pathway bacterial outer membrane biogenesis; LPS lipid A biosynthesis. Its function is as follows. Condensation of UDP-2,3-diacylglucosamine and 2,3-diacylglucosamine-1-phosphate to form lipid A disaccharide, a precursor of lipid A, a phosphorylated glycolipid that anchors the lipopolysaccharide to the outer membrane of the cell. In Aliivibrio fischeri (strain MJ11) (Vibrio fischeri), this protein is Lipid-A-disaccharide synthase.